The following is an 844-amino-acid chain: Leucine--tRNA ligase (844 aa).

Positions 39–49 (PYPSGRIHMGH) match the 'HIGH' region motif. Residues 621 to 625 (KMSKS) carry the 'KMSKS' region motif. Lys624 provides a ligand contact to ATP.

It belongs to the class-I aminoacyl-tRNA synthetase family.

It is found in the cytoplasm. It catalyses the reaction tRNA(Leu) + L-leucine + ATP = L-leucyl-tRNA(Leu) + AMP + diphosphate. The chain is Leucine--tRNA ligase from Paracoccus denitrificans (strain Pd 1222).